The following is a 98-amino-acid chain: MPSISININLAFATALLGMLMFRSHMMSSLLCLEGMMLSMFILSTLTILNMQFTMSFTMPILLLVFAACEAAIGLALLVMVSNNYGLDYIQNLNLLQC.

3 helical membrane-spanning segments follow: residues 2–22 (PSIS…MLMF), 29–49 (SLLC…LTIL), and 61–81 (ILLL…LVMV).

It belongs to the complex I subunit 4L family. As to quaternary structure, core subunit of respiratory chain NADH dehydrogenase (Complex I) which is composed of 45 different subunits.

The protein resides in the mitochondrion inner membrane. It carries out the reaction a ubiquinone + NADH + 5 H(+)(in) = a ubiquinol + NAD(+) + 4 H(+)(out). Functionally, core subunit of the mitochondrial membrane respiratory chain NADH dehydrogenase (Complex I) which catalyzes electron transfer from NADH through the respiratory chain, using ubiquinone as an electron acceptor. Part of the enzyme membrane arm which is embedded in the lipid bilayer and involved in proton translocation. The sequence is that of NADH-ubiquinone oxidoreductase chain 4L (MT-ND4L) from Microcebus simmonsi (Simmons's mouse lemur).